Reading from the N-terminus, the 66-residue chain is Large ribosomal subunit protein bL31 (66 aa).

Zn(2+) is bound by residues C16, C18, C36, and C39.

This sequence belongs to the bacterial ribosomal protein bL31 family. Type A subfamily. Part of the 50S ribosomal subunit. Zn(2+) is required as a cofactor.

Its function is as follows. Binds the 23S rRNA. This Campylobacter hominis (strain ATCC BAA-381 / DSM 21671 / CCUG 45161 / LMG 19568 / NCTC 13146 / CH001A) protein is Large ribosomal subunit protein bL31.